Consider the following 302-residue polypeptide: MKALPIQNPTHASTISWRDYLELTKPRVVALMILTSVIGMLLAAPGVPEWSVLLFGNLGIALLAGAAAVVNHVVDQKIDTVMARTRKRPVATGRIAPLDALLFATVLAALGMVVLVWQVNELTAWLTLASLVGYAGVYTLFLKRATPQNIVIGGLAGAMPPLLGWTAVTGQVEGHALLLVLIIFAWTPPHFWALAIHRKEEYAKAGIPMLPVTHGNRYTELHILLYTLMLLAVSLLPFVTGMSGGIYLVGALALGLRFLQYAVRLLRGDDRRVALNTFKYSITYLMALFVVLLVDHFVFVPA.

The next 9 helical transmembrane spans lie at 28–48 (VVAL…PGVP), 50–70 (WSVL…AAVV), 95–115 (IAPL…MVVL), 122–142 (LTAW…TLFL), 150–170 (IVIG…AVTG), 176–196 (ALLL…ALAI), 221–241 (LHIL…FVTG), 243–263 (SGGI…QYAV), and 282–302 (ITYL…FVPA).

Belongs to the UbiA prenyltransferase family. Protoheme IX farnesyltransferase subfamily.

The protein resides in the cell inner membrane. The catalysed reaction is heme b + (2E,6E)-farnesyl diphosphate + H2O = Fe(II)-heme o + diphosphate. It participates in porphyrin-containing compound metabolism; heme O biosynthesis; heme O from protoheme: step 1/1. In terms of biological role, converts heme B (protoheme IX) to heme O by substitution of the vinyl group on carbon 2 of heme B porphyrin ring with a hydroxyethyl farnesyl side group. This Marinobacter nauticus (strain ATCC 700491 / DSM 11845 / VT8) (Marinobacter aquaeolei) protein is Protoheme IX farnesyltransferase.